A 193-amino-acid chain; its full sequence is MTEYALLFVSILLVNNFVLVKFLGLCPFMGVSKKLETAIGMGMATTFVMTLGSMFSWLINEFILVPLDILYLRTMAFILVLAVVVQFSEMFVRKVSPELYRLLGIFLPLITTNCAVLGVVLLNINLSHGFLQSTIYGFGGAAGFSLVMVLFAAIRERLAVSDIPAPFRGSSIALITAGLMSLAFMGFTGLVKF.

Transmembrane regions (helical) follow at residues 5 to 25, 39 to 59, 62 to 82, 102 to 122, 134 to 154, and 171 to 191; these read ALLF…FLGL, IGMG…SWLI, FILV…LVLA, LLGI…VVLL, TIYG…FAAI, and SIAL…TGLV.

The protein belongs to the NqrDE/RnfAE family. As to quaternary structure, the complex is composed of six subunits: RnfA, RnfB, RnfC, RnfD, RnfE and RnfG.

It localises to the cell inner membrane. Part of a membrane-bound complex that couples electron transfer with translocation of ions across the membrane. The polypeptide is Ion-translocating oxidoreductase complex subunit A (Pectobacterium atrosepticum (strain SCRI 1043 / ATCC BAA-672) (Erwinia carotovora subsp. atroseptica)).